The following is a 123-amino-acid chain: UPF0102 protein Csal_2201 (123 aa).

It belongs to the UPF0102 family.

The sequence is that of UPF0102 protein Csal_2201 from Chromohalobacter salexigens (strain ATCC BAA-138 / DSM 3043 / CIP 106854 / NCIMB 13768 / 1H11).